Here is a 124-residue protein sequence, read N- to C-terminus: Quinol oxidase subunit 4 (124 aa).

Helical transmembrane passes span 16 to 36, 44 to 64, and 78 to 98; these read IVGFALSIVLTLLALWVAVYT, LWIIFGFAFIQAALQLLMFMH, and TLFGFFGAIVIVLGSIWIFAA.

The protein belongs to the cytochrome c oxidase bacterial subunit 4 family.

Its subcellular location is the cell membrane. It catalyses the reaction 2 a quinol + O2 = 2 a quinone + 2 H2O. Catalyzes quinol oxidation with the concomitant reduction of oxygen to water. Major component for energy conversion during vegetative growth. This is Quinol oxidase subunit 4 (qoxD) from Bacillus spizizenii (strain ATCC 23059 / NRRL B-14472 / W23) (Bacillus subtilis subsp. spizizenii).